The chain runs to 476 residues: Inosine-5'-monophosphate dehydrogenase (476 aa).

CBS domains are found at residues 92 to 150 and 151 to 207; these read MIEN…IADV and MTKD…PNAS. NAD(+) is bound by residues aspartate 244 and 294 to 296; that span reads GVG. K(+) contacts are provided by glycine 296 and glycine 298. An IMP-binding site is contributed by serine 299. Cysteine 301 contributes to the K(+) binding site. Catalysis depends on cysteine 301, which acts as the Thioimidate intermediate. IMP contacts are provided by residues 334–336, 357–358, 381–385, and glutamate 413; these read DGG, GS, and YRGMA. K(+)-binding residues include glutamate 467 and serine 468.

The protein belongs to the IMPDH/GMPR family. As to quaternary structure, homotetramer. K(+) is required as a cofactor.

The enzyme catalyses IMP + NAD(+) + H2O = XMP + NADH + H(+). It functions in the pathway purine metabolism; XMP biosynthesis via de novo pathway; XMP from IMP: step 1/1. Its activity is regulated as follows. Mycophenolic acid (MPA) is a non-competitive inhibitor that prevents formation of the closed enzyme conformation by binding to the same site as the amobile flap. In contrast, mizoribine monophosphate (MZP) is a competitive inhibitor that induces the closed conformation. MPA is a potent inhibitor of mammalian IMPDHs but a poor inhibitor of the bacterial enzymes. MZP is a more potent inhibitor of bacterial IMPDH. Functionally, catalyzes the conversion of inosine 5'-phosphate (IMP) to xanthosine 5'-phosphate (XMP), the first committed and rate-limiting step in the de novo synthesis of guanine nucleotides, and therefore plays an important role in the regulation of cell growth. The polypeptide is Inosine-5'-monophosphate dehydrogenase (Nitrosopumilus maritimus (strain SCM1)).